Consider the following 199-residue polypeptide: MSNPQTTIAYSLCHARASLTSALPDAAQVVHVFEYGTRAIMVRGRERQDRLPRGGVVIQHTPIGLLVIIDCRAEFCAYRFIGRDSNQKLERGWDAHMYAYPFDSWVSSSRGESARSATAGILTVVWTADTIYITATIYGSPPEETPGAAHGVGAAPPPPTTACPGTAEFLQPTADLLVEVLREIQLSPALEYADKLLGS.

Belongs to the alphaherpesvirinae HHV-1 UL4 family.

It localises to the host nucleus. The sequence is that of Nuclear protein UL4 from Homo sapiens (Human).